Here is a 137-residue protein sequence, read N- to C-terminus: Nucleoside diphosphate kinase (137 aa).

Lys-9, Phe-57, Arg-85, Thr-91, Arg-102, and Asn-112 together coordinate ATP. His-115 serves as the catalytic Pros-phosphohistidine intermediate.

The protein belongs to the NDK family. In terms of assembly, homotetramer. Requires Mg(2+) as cofactor.

The protein localises to the cytoplasm. It catalyses the reaction a 2'-deoxyribonucleoside 5'-diphosphate + ATP = a 2'-deoxyribonucleoside 5'-triphosphate + ADP. The catalysed reaction is a ribonucleoside 5'-diphosphate + ATP = a ribonucleoside 5'-triphosphate + ADP. Functionally, major role in the synthesis of nucleoside triphosphates other than ATP. The ATP gamma phosphate is transferred to the NDP beta phosphate via a ping-pong mechanism, using a phosphorylated active-site intermediate. This Campylobacter jejuni subsp. jejuni serotype O:6 (strain 81116 / NCTC 11828) protein is Nucleoside diphosphate kinase.